We begin with the raw amino-acid sequence, 415 residues long: Methylmalonic aciduria type A homolog, mitochondrial (415 aa).

Residues 1 to 62 (MTISTLLLSP…LLSDGFRRTL (62 aa)) constitute a mitochondrion transit peptide. GTP contacts are provided by residues 147-155 (GPPGAGKST), aspartate 289, and 325-327 (SAR).

This sequence belongs to the SIMIBI class G3E GTPase family. ArgK/MeaB subfamily. As to quaternary structure, homodimer. Interacts with MMUT (the apoenzyme form); the interaction is GTP dependent.

It is found in the mitochondrion. Its subcellular location is the cytoplasm. The catalysed reaction is GTP + H2O = GDP + phosphate + H(+). With respect to regulation, GTPase activity is stimulated by MMUT. GTPase, binds and hydrolyzes GTP. Involved in intracellular vitamin B12 metabolism, mediates the transport of cobalamin (Cbl) into mitochondria for the final steps of adenosylcobalamin (AdoCbl) synthesis. Functions as a G-protein chaperone that assists AdoCbl cofactor delivery from MMAB to the methylmalonyl-CoA mutase (MMUT). Plays a dual role as both a protectase and a reactivase for MMUT. Protects MMUT from progressive inactivation by oxidation by decreasing the rate of the formation of the oxidized inactive cofactor hydroxocobalamin (OH2Cbl). Additionally acts a reactivase by promoting the replacement of OH2Cbl by the active cofactor AdoCbl, restoring the activity of MMUT in the presence and hydrolysis of GTP. This Mus musculus (Mouse) protein is Methylmalonic aciduria type A homolog, mitochondrial.